The primary structure comprises 1407 residues: DNA-directed RNA polymerase subunit beta' (1407 aa).

4 residues coordinate Zn(2+): cysteine 70, cysteine 72, cysteine 85, and cysteine 88. The Mg(2+) site is built by aspartate 460, aspartate 462, and aspartate 464. Zn(2+)-binding residues include cysteine 814, cysteine 888, cysteine 895, and cysteine 898. Lysine 972 is subject to N6-acetyllysine.

This sequence belongs to the RNA polymerase beta' chain family. The RNAP catalytic core consists of 2 alpha, 1 beta, 1 beta' and 1 omega subunit. When a sigma factor is associated with the core the holoenzyme is formed, which can initiate transcription. Mg(2+) serves as cofactor. It depends on Zn(2+) as a cofactor.

The enzyme catalyses RNA(n) + a ribonucleoside 5'-triphosphate = RNA(n+1) + diphosphate. In terms of biological role, DNA-dependent RNA polymerase catalyzes the transcription of DNA into RNA using the four ribonucleoside triphosphates as substrates. The polypeptide is DNA-directed RNA polymerase subunit beta' (Shigella flexneri serotype 5b (strain 8401)).